The sequence spans 367 residues: 3-dehydroquinate synthase (367 aa).

NAD(+) is bound by residues 69–74 (DGESHK), 103–107 (GVIGD), 127–128 (TT), lysine 140, lysine 149, and 167–170 (TLAT). Zn(2+)-binding residues include glutamate 182, histidine 245, and histidine 262.

It belongs to the sugar phosphate cyclases superfamily. Dehydroquinate synthase family. Co(2+) is required as a cofactor. Requires Zn(2+) as cofactor. It depends on NAD(+) as a cofactor.

Its subcellular location is the cytoplasm. It carries out the reaction 7-phospho-2-dehydro-3-deoxy-D-arabino-heptonate = 3-dehydroquinate + phosphate. The protein operates within metabolic intermediate biosynthesis; chorismate biosynthesis; chorismate from D-erythrose 4-phosphate and phosphoenolpyruvate: step 2/7. Its function is as follows. Catalyzes the conversion of 3-deoxy-D-arabino-heptulosonate 7-phosphate (DAHP) to dehydroquinate (DHQ). The sequence is that of 3-dehydroquinate synthase from Stutzerimonas stutzeri (strain A1501) (Pseudomonas stutzeri).